The sequence spans 226 residues: 7-cyano-7-deazaguanine synthase (226 aa).

Residue 11–21 (LSGGLDSATCL) coordinates ATP. Zn(2+)-binding residues include Cys-191, Cys-201, Cys-204, and Cys-207.

It belongs to the QueC family. It depends on Zn(2+) as a cofactor.

The catalysed reaction is 7-carboxy-7-deazaguanine + NH4(+) + ATP = 7-cyano-7-deazaguanine + ADP + phosphate + H2O + H(+). The protein operates within purine metabolism; 7-cyano-7-deazaguanine biosynthesis. Functionally, catalyzes the ATP-dependent conversion of 7-carboxy-7-deazaguanine (CDG) to 7-cyano-7-deazaguanine (preQ(0)). The sequence is that of 7-cyano-7-deazaguanine synthase from Aromatoleum aromaticum (strain DSM 19018 / LMG 30748 / EbN1) (Azoarcus sp. (strain EbN1)).